The following is a 526-amino-acid chain: Butyrophilin subfamily 1 member A1 (526 aa).

The signal sequence occupies residues M1 to S26. 2 consecutive Ig-like V-type domains span residues A27–H138 and P148–S234. At A27–R242 the chain is on the extracellular side. Cystine bridges form between C50–C124 and C164–C218. N-linked (GlcNAc...) asparagine glycosylation is found at N55 and N215. The chain crosses the membrane as a helical span at residues L243–W269. The Cytoplasmic segment spans residues R270–P526. The region spanning S285 to P479 is the B30.2/SPRY domain. Residues I495–P526 form a disordered region. Residues S504–H513 are compositionally biased toward basic and acidic residues. A compositionally biased stretch (polar residues) spans I517 to P526.

Belongs to the immunoglobulin superfamily. BTN/MOG family. Seems to associate with xanthine dehydrogenase/oxidase. Post-translationally, N-glycosylated.

The protein resides in the membrane. Its subcellular location is the secreted. In terms of biological role, may function in the secretion of milk-fat droplets. May act as a specific membrane-associated receptor for the association of cytoplasmic droplets with the apical plasma membrane. Inhibits the proliferation of CD4 and CD8 T-cells activated by anti-CD3 antibodies, T-cell metabolism and IL2 and IFNG secretion. This is Butyrophilin subfamily 1 member A1 (BTN1A1) from Homo sapiens (Human).